The chain runs to 597 residues: DNA mismatch repair protein MutL (597 aa).

Belongs to the DNA mismatch repair MutL/HexB family.

Functionally, this protein is involved in the repair of mismatches in DNA. It is required for dam-dependent methyl-directed DNA mismatch repair. May act as a 'molecular matchmaker', a protein that promotes the formation of a stable complex between two or more DNA-binding proteins in an ATP-dependent manner without itself being part of a final effector complex. The chain is DNA mismatch repair protein MutL from Rhodopseudomonas palustris (strain BisB5).